A 508-amino-acid chain; its full sequence is MLVSKSIASRAGLASAVASRSCRPSFTAMPLRAKVLGQQAPISTQAAAELFKPVEGDEPEDVLFNSLYNLRSVELNRPAKYNALNGSMIRKIAPRLLEWERSDMANVIVIKGSGEKAFCAGGDVAALAKQNAEGPEGVKKSVDYFGLEYKLNHLISTYTRPYVAFLDGITMGGGVGLSIHAPFRIATERTVFAMPETKIGFFPDVGASFFLPRMPGQVGPYLGLTSALLKGVQVYYAGIATHYLHSSSLPALESRLAELTPRDYWTIEQRLSVINDTIEEFSTGVPYDENIEIGGKIRLAIDRCFKYDKIDEIIAALKEEAAEGAKGGVQSWAKNTLEELTQRSPTSLHVTLRQMRLGKSWGIAHTFKREHQMAAKFMKSHDFNEGVTALLIDKGANGPAKWKPASLDEIPPGANISEDYFRNDPEVPVLELLNDRSYMQYPYNKFGLPNDYDVKEAIEKGNFTREKLIDHFVETRRGKQGVREAVSDVLDRMAVRSKGTEHVQWKKE.

It belongs to the enoyl-CoA hydratase/isomerase family. Mitochondrion-specific ribosomal protein mS47 subfamily. In terms of assembly, component of the mitochondrial small ribosomal subunit (mt-SSU). Mature N.crassa 74S mitochondrial ribosomes consist of a small (37S) and a large (54S) subunit. The 37S small subunit contains a 16S ribosomal RNA (16S mt-rRNA) and 32 different proteins. The 54S large subunit contains a 23S rRNA (23S mt-rRNA) and 42 different proteins. mS47 forms a protuberance of the N.crassa mitoribosome and retains a solvent-exposed cavity liekly capable of accommodating a substrate, in accordance with it being an active enzyme as well as an integral constituent of the mitoribosome.

Its subcellular location is the mitochondrion. The catalysed reaction is 3-hydroxy-2-methylpropanoyl-CoA + H2O = 3-hydroxy-2-methylpropanoate + CoA + H(+). Functionally, component of the mitochondrial ribosome (mitoribosome), a dedicated translation machinery responsible for the synthesis of mitochondrial genome-encoded proteins, including at least some of the essential transmembrane subunits of the mitochondrial respiratory chain. The mitoribosomes are attached to the mitochondrial inner membrane and translation products are cotranslationally integrated into the membrane. mS47 has enzymatic activity in vitro, and is able to catalyze the specific hydrolysis of 3-hydroxyisobutyryl-CoA (HIBYL-CoA). However, because the turnover rate of mS47 is only a fraction of that of the homologous mammalian enzyme, the physiological function of this activity remains unclear. The polypeptide is Small ribosomal subunit protein mS47 (ehd3) (Neurospora crassa (strain ATCC 24698 / 74-OR23-1A / CBS 708.71 / DSM 1257 / FGSC 987)).